The following is a 651-amino-acid chain: MAAHVSTGNIHNFYLAGQVYRGQAFSWSSASTFMANPFKEPSWSSGVFKALKAERCGCYSRGISPISETSKPIRAVSVSSSTKYYDFTVIGSGVAGLRYALEVAKQGTVAVITKDEPHESNTNYAQGGVSAVLCPLDSVESHMRDTMVAGAHLCDEETVRVVCTEGPERIRELIAMGASFDHGEDGNLHLAREGGHSHCRIVHAADMTGREIERALLEAVLNDPNISVFKHHFAIDLLTSQDGLNTVCHGVDTLNIKTNEVVRFISKVTLLASGGAGHIYPSTTNPLVATGDGMAMAHRAQAVISNMEFVQFHPTALADEGLPIKLQTARENAFLITEAVRGDGGILYNLGMERFMPVYDERAELAPRDVVARSIDDQLKKRNEKYVLLDISHKPREKILAHFPNIASECLKHGLDITRQPIPVVPAAHYMCGGVRAGLQGETNVLGLFVAGEVACTGLHGANRLASNSLLEALVFARRAVQPSTELMKRTRLDVCASEKWTRPVVATARLLGDEVIAKIIALTKEVRRELQEVMWKYVGIVRSTIRLTTAERKIAELEAKWETFLFEHGWEQTVVALEACEMRNLFCCAKLVVSSALARHESRGLHYMTDFPFVEESKRIPTIILPSSPTTASWSSRRLQNISSSSLIDC.

The N-terminal 74 residues, 1–74, are a transit peptide targeting the chloroplast; that stretch reads MAAHVSTGNI…PISETSKPIR (74 aa). Residues 92–95, K114, 121–128, and D292 each bind FAD; these read SGVA and NTNYAQGG. The active-site Proton donor/acceptor is R368. Residues E453 and 469–470 contribute to the FAD site; that span reads SL.

The protein belongs to the FAD-dependent oxidoreductase 2 family. NadB subfamily. Interacts in vitro with QS. The cofactor is FAD.

It is found in the plastid. The protein localises to the chloroplast. The enzyme catalyses L-aspartate + O2 = iminosuccinate + H2O2. It functions in the pathway cofactor biosynthesis; NAD(+) biosynthesis; iminoaspartate from L-aspartate (oxidase route): step 1/1. Functionally, catalyzes the oxidation of L-aspartate to iminoaspartate. Can complement nadB-deficient E.coli mutant. Plays a role in stomatal immunity. In Arabidopsis thaliana (Mouse-ear cress), this protein is L-aspartate oxidase, chloroplastic.